The primary structure comprises 528 residues: Chaperonin GroEL, chloroplastic (528 aa).

Residues 29–32, 86–90, glycine 414, 480–482, and aspartate 496 each bind ATP; these read TLGP, DGTTT, and DAA.

The protein belongs to the chaperonin (HSP60) family. Forms a cylinder of 14 subunits composed of two heptameric rings stacked back-to-back. Interacts with the co-chaperonin GroES.

It localises to the plastid. Its subcellular location is the chloroplast. The catalysed reaction is ATP + H2O + a folded polypeptide = ADP + phosphate + an unfolded polypeptide.. Functionally, together with its co-chaperonin GroES, plays an essential role in assisting protein folding. The GroEL-GroES system forms a nano-cage that allows encapsulation of the non-native substrate proteins and provides a physical environment optimized to promote and accelerate protein folding. The protein is Chaperonin GroEL, chloroplastic of Pyropia yezoensis (Susabi-nori).